The chain runs to 503 residues: Cytochrome P450 7A1 (503 aa).

The chain crosses the membrane as a helical span at residues 4–24 (ISLIWGIAVLVSCCIWFIVGI). Residue Cys-444 coordinates heme.

It belongs to the cytochrome P450 family. Heme serves as cofactor. In terms of tissue distribution, detected in liver (at protein level). Liver.

The protein resides in the endoplasmic reticulum membrane. It localises to the microsome membrane. The enzyme catalyses cholesterol + reduced [NADPH--hemoprotein reductase] + O2 = 7alpha-hydroxycholesterol + oxidized [NADPH--hemoprotein reductase] + H2O + H(+). The catalysed reaction is 4beta-hydroxycholesterol + reduced [NADPH--hemoprotein reductase] + O2 = 4beta,7alpha-dihydroxycholesterol + oxidized [NADPH--hemoprotein reductase] + H2O + H(+). It catalyses the reaction lathosterol + reduced [NADPH--hemoprotein reductase] + O2 = 7alpha,8alpha-epoxy-5alpha-cholestan-3beta-ol + oxidized [NADPH--hemoprotein reductase] + H2O + H(+). It carries out the reaction lathosterol + reduced [NADPH--hemoprotein reductase] + O2 = 5alpha-cholestan-7-oxo-3beta-ol + oxidized [NADPH--hemoprotein reductase] + H2O + H(+). The enzyme catalyses 7-dehydrocholesterol + reduced [NADPH--hemoprotein reductase] + O2 = 7-oxocholesterol + oxidized [NADPH--hemoprotein reductase] + H2O + H(+). The catalysed reaction is (24S)-hydroxycholesterol + reduced [NADPH--hemoprotein reductase] + O2 = (24S)-7alpha-dihydroxycholesterol + oxidized [NADPH--hemoprotein reductase] + H2O + H(+). It catalyses the reaction (24R)-hydroxycholesterol + reduced [NADPH--hemoprotein reductase] + O2 = (24R)-7alpha-dihydroxycholesterol + oxidized [NADPH--hemoprotein reductase] + H2O + H(+). Its pathway is lipid metabolism; bile acid biosynthesis. It participates in steroid metabolism; cholesterol degradation. A cytochrome P450 monooxygenase involved in the metabolism of endogenous cholesterol and its oxygenated derivatives (oxysterols). Mechanistically, uses molecular oxygen inserting one oxygen atom into a substrate, and reducing the second into a water molecule, with two electrons provided by NADPH via cytochrome P450 reductase (CPR; NADPH-ferrihemoprotein reductase). Functions as a critical regulatory enzyme of bile acid biosynthesis and cholesterol homeostasis. Catalyzes the hydroxylation of carbon hydrogen bond at 7-alpha position of cholesterol, a rate-limiting step in cholesterol catabolism and bile acid biosynthesis. 7-alpha hydroxylates several oxysterols, including 4beta-hydroxycholesterol and 24-hydroxycholesterol. Catalyzes the oxidation of the 7,8 double bond of 7-dehydrocholesterol and lathosterol with direct and predominant formation of the 7-keto derivatives. The chain is Cytochrome P450 7A1 (Cyp7a1) from Rattus norvegicus (Rat).